Here is a 271-residue protein sequence, read N- to C-terminus: Shikimate dehydrogenase (NADP(+)) (271 aa).

Residues 14 to 16 (SRS) and threonine 61 contribute to the shikimate site. The active-site Proton acceptor is lysine 65. Shikimate is bound by residues asparagine 86 and aspartate 102. Residues 126–130 (GAGGA), 149–154 (NRTFSR), and methionine 213 each bind NADP(+). Tyrosine 215 is a binding site for shikimate. Glycine 238 contacts NADP(+).

The protein belongs to the shikimate dehydrogenase family. In terms of assembly, homodimer.

The enzyme catalyses shikimate + NADP(+) = 3-dehydroshikimate + NADPH + H(+). It functions in the pathway metabolic intermediate biosynthesis; chorismate biosynthesis; chorismate from D-erythrose 4-phosphate and phosphoenolpyruvate: step 4/7. Its function is as follows. Involved in the biosynthesis of the chorismate, which leads to the biosynthesis of aromatic amino acids. Catalyzes the reversible NADPH linked reduction of 3-dehydroshikimate (DHSA) to yield shikimate (SA). The chain is Shikimate dehydrogenase (NADP(+)) from Histophilus somni (strain 129Pt) (Haemophilus somnus).